The primary structure comprises 210 residues: ER membrane protein complex subunit 8 (210 aa).

An MPN domain is found at 4-150; sequence VKLTTQAYCK…IHVYEHHENR (147 aa).

Belongs to the EMC8/EMC9 family. Component of the ER membrane protein complex (EMC). EMC8 and EMC9 are mutually exclusive subunits of the EMC complex. Expressed in liver, pancreas, heart, lung, kidney, brain, skeletal muscle, and placenta. Expression levels are highest in pancreas and moderate in heart, skeletal muscle, and placenta.

The protein resides in the endoplasmic reticulum membrane. Part of the endoplasmic reticulum membrane protein complex (EMC) that enables the energy-independent insertion into endoplasmic reticulum membranes of newly synthesized membrane proteins. Preferentially accommodates proteins with transmembrane domains that are weakly hydrophobic or contain destabilizing features such as charged and aromatic residues. Involved in the cotranslational insertion of multi-pass membrane proteins in which stop-transfer membrane-anchor sequences become ER membrane spanning helices. It is also required for the post-translational insertion of tail-anchored/TA proteins in endoplasmic reticulum membranes. By mediating the proper cotranslational insertion of N-terminal transmembrane domains in an N-exo topology, with translocated N-terminus in the lumen of the ER, controls the topology of multi-pass membrane proteins like the G protein-coupled receptors. By regulating the insertion of various proteins in membranes, it is indirectly involved in many cellular processes. This is ER membrane protein complex subunit 8 (EMC8) from Homo sapiens (Human).